Here is a 446-residue protein sequence, read N- to C-terminus: Cobalamin biosynthesis protein CbiHC (446 aa).

Residues 1-246 form a cobalt-factor III C(17)-methyltransferase region; that stretch reads MLLLPSRGKL…MFTPRGYSNK (246 aa). Positions 247-446 are cobalt-precorrin-8 methylmutase; the sequence is YNIGEKRRAE…CLIEHADRPD (200 aa).

In the N-terminal section; belongs to the precorrin methyltransferase family. The protein in the C-terminal section; belongs to the CobH family.

It carries out the reaction Co(II)-factor III + S-adenosyl-L-methionine + H(+) = Co(II)-factor IV + S-adenosyl-L-homocysteine. The enzyme catalyses Co-precorrin-8X = cob(II)yrinate. Its pathway is cofactor biosynthesis; adenosylcobalamin biosynthesis; cob(II)yrinate a,c-diamide from sirohydrochlorin (anaerobic route): step 3/10. It functions in the pathway cofactor biosynthesis; adenosylcobalamin biosynthesis; cob(II)yrinate a,c-diamide from sirohydrochlorin (anaerobic route): step 9/10. In terms of biological role, bifunctional enzyme with a methyltransferase domain that catalyzes the ring contraction and methylation of C-17 in cobalt-factor III to form cobalt-factor IV, and an isomerase domain that catalyzes the conversion of cobalt-precorrin-8 to cobyrinate. This chain is Cobalamin biosynthesis protein CbiHC (cbiHC), found in Archaeoglobus fulgidus (strain ATCC 49558 / DSM 4304 / JCM 9628 / NBRC 100126 / VC-16).